Consider the following 322-residue polypeptide: Structural glycoprotein p40 (322 aa).

Asn130, Asn283, and Asn290 each carry an N-linked (GlcNAc...) asparagine; by host glycan.

Belongs to the baculoviridae gp41 family.

It localises to the virion. The chain is Structural glycoprotein p40 (P40) from Heliothis zea nuclear polyhedrosis virus (HzSNPV).